The sequence spans 113 residues: MSEVNVPLSFSDAAASRVKALIAEEENPALKLRVYITGGGCSGFQYGFTFDENVNDGDTTIENSGVTLVVDPMSLQYLIGGIVDYTEGLEGARFFVNNPNATTTCGCGASFSV.

Positions 41, 105, and 107 each coordinate iron-sulfur cluster.

The protein belongs to the HesB/IscA family. Homodimer. Requires iron-sulfur cluster as cofactor.

Required for insertion of 4Fe-4S clusters for at least IspG. The sequence is that of Iron-sulfur cluster insertion protein ErpA from Vibrio parahaemolyticus serotype O3:K6 (strain RIMD 2210633).